The sequence spans 588 residues: MNNSINHKFHHISRAEYQELLAVSRGDAVADYIIDNVSILDLINGGEISGPIVIKGRYIAGVGAEYADAPALQRIDARGATAVPGFIDAHLHIESSMMTPVTFETATLPRGLTTVICDPHEIVNVMGEAGFAWFARCAEQARQNQYLQVSSCVPALEGCDVNGASFTLEQMLAWRDHPQVTGLAEMMDYPGVISGQNALLDKLDAFRHLTLDGHCPGLGGKELNAYITAGIENCHESYQLEEGRRKLQLGMSLMIREGSAARNLNALAPLINEFNSPQCMLCTDDRNPWEIAHEGHIDALIRRLIEQHNVPLHVAYRVASWSTARHFGLNHLGLLAPGKQADIVLLSDARKVTVQQVLVKGEPIDAQTLQAEESARLAQSAPPYGNTIARQPVSASDFALQFTPGKRYRVIDVIHNELITHSHSSVYSENGFDRDDVSFIAVLERYGQRLAPACGLLGGFGLNEGALAATVSHDSHNIVVIGRSAEEMALAVNQVIQDGGGLCVVRNGQVQSHLPLPIAGLMSTDTAQSLAEQIDALKAAARECGPLPDEPFIQMAFLSLPVIPALKLTSQGLFDGEKFAFTTLEVTE.

This sequence belongs to the metallo-dependent hydrolases superfamily. Adenine deaminase family. As to quaternary structure, homodimer. Requires Mn(2+) as cofactor.

It carries out the reaction adenine + H2O + H(+) = hypoxanthine + NH4(+). This is Adenine deaminase from Escherichia coli (strain 55989 / EAEC).